We begin with the raw amino-acid sequence, 210 residues long: Na(+)-translocating NADH-quinone reductase subunit D (210 aa).

A run of 5 helical transmembrane segments spans residues 42–62, 72–92, 103–123, 131–151, and 178–198; these read FVMT…ISLI, IIAQ…VLKA, VFVG…AYAM, FLDG…VATV, and NGLL…IWGV.

Belongs to the NqrDE/RnfAE family. As to quaternary structure, composed of six subunits; NqrA, NqrB, NqrC, NqrD, NqrE and NqrF.

The protein resides in the cell inner membrane. It carries out the reaction a ubiquinone + n Na(+)(in) + NADH + H(+) = a ubiquinol + n Na(+)(out) + NAD(+). Its function is as follows. NQR complex catalyzes the reduction of ubiquinone-1 to ubiquinol by two successive reactions, coupled with the transport of Na(+) ions from the cytoplasm to the periplasm. NqrA to NqrE are probably involved in the second step, the conversion of ubisemiquinone to ubiquinol. This is Na(+)-translocating NADH-quinone reductase subunit D from Aeromonas salmonicida (strain A449).